Reading from the N-terminus, the 92-residue chain is UPF0223 protein SP_1404 (92 aa).

The protein belongs to the UPF0223 family.

The polypeptide is UPF0223 protein SP_1404 (Streptococcus pneumoniae serotype 4 (strain ATCC BAA-334 / TIGR4)).